We begin with the raw amino-acid sequence, 190 residues long: Large ribosomal subunit protein uL5 (190 aa).

The protein belongs to the universal ribosomal protein uL5 family. Part of the 50S ribosomal subunit; part of the 5S rRNA/L5/L18/L25 subcomplex. Contacts the 5S rRNA and the P site tRNA. Forms a bridge to the 30S subunit in the 70S ribosome.

Functionally, this is one of the proteins that bind and probably mediate the attachment of the 5S RNA into the large ribosomal subunit, where it forms part of the central protuberance. In the 70S ribosome it contacts protein S13 of the 30S subunit (bridge B1b), connecting the 2 subunits; this bridge is implicated in subunit movement. Contacts the P site tRNA; the 5S rRNA and some of its associated proteins might help stabilize positioning of ribosome-bound tRNAs. The chain is Large ribosomal subunit protein uL5 from Bifidobacterium adolescentis (strain ATCC 15703 / DSM 20083 / NCTC 11814 / E194a).